The sequence spans 202 residues: dITP/XTP pyrophosphatase (202 aa).

A substrate-binding site is contributed by threonine 9–lysine 14. Residue aspartate 73 is the Proton acceptor of the active site. Residue aspartate 73 participates in Mg(2+) binding. Residues serine 74, phenylalanine 158–aspartate 161, lysine 181, and histidine 186–arginine 187 contribute to the substrate site.

It belongs to the HAM1 NTPase family. Homodimer. Requires Mg(2+) as cofactor.

The enzyme catalyses XTP + H2O = XMP + diphosphate + H(+). It carries out the reaction dITP + H2O = dIMP + diphosphate + H(+). The catalysed reaction is ITP + H2O = IMP + diphosphate + H(+). Pyrophosphatase that catalyzes the hydrolysis of nucleoside triphosphates to their monophosphate derivatives, with a high preference for the non-canonical purine nucleotides XTP (xanthosine triphosphate), dITP (deoxyinosine triphosphate) and ITP. Seems to function as a house-cleaning enzyme that removes non-canonical purine nucleotides from the nucleotide pool, thus preventing their incorporation into DNA/RNA and avoiding chromosomal lesions. The sequence is that of dITP/XTP pyrophosphatase from Lactobacillus acidophilus (strain ATCC 700396 / NCK56 / N2 / NCFM).